The sequence spans 512 residues: Maturase K (512 aa).

The protein belongs to the intron maturase 2 family. MatK subfamily.

It localises to the plastid. The protein localises to the chloroplast. Its function is as follows. Usually encoded in the trnK tRNA gene intron. Probably assists in splicing its own and other chloroplast group II introns. This is Maturase K from Lemna gibba (Swollen duckweed).